Here is a 599-residue protein sequence, read N- to C-terminus: Aspartate--tRNA ligase (599 aa).

E175 lines the L-aspartate pocket. Residues 199-202 (QQFK) are aspartate. L-aspartate is bound by residues R221 and H446. 221–223 (RDE) contacts ATP. E480 is an ATP binding site. R487 serves as a coordination point for L-aspartate. ATP is bound at residue 532-535 (GVDR).

It belongs to the class-II aminoacyl-tRNA synthetase family. Type 1 subfamily. In terms of assembly, homodimer.

The protein resides in the cytoplasm. It carries out the reaction tRNA(Asp) + L-aspartate + ATP = L-aspartyl-tRNA(Asp) + AMP + diphosphate. Catalyzes the attachment of L-aspartate to tRNA(Asp) in a two-step reaction: L-aspartate is first activated by ATP to form Asp-AMP and then transferred to the acceptor end of tRNA(Asp). In Streptomyces griseus subsp. griseus (strain JCM 4626 / CBS 651.72 / NBRC 13350 / KCC S-0626 / ISP 5235), this protein is Aspartate--tRNA ligase.